The chain runs to 165 residues: Ixolaris (165 aa).

A signal peptide spans 1–26; that stretch reads MRAVSCFLYYGVAWIALGSWGASSSA. BPTI/Kunitz inhibitor domains lie at 43–93 and 101–151; these read CLDP…NESC and CSLE…KETC. Cystine bridges form between Cys-43–Cys-93, Cys-51–Cys-76, Cys-68–Cys-89, Cys-101–Cys-151, and Cys-126–Cys-147. N-linked (GlcNAc...) asparagine glycans are attached at residues Asn-90 and Asn-123. Residue Asn-161 is glycosylated (N-linked (GlcNAc...) asparagine).

As to quaternary structure, monomer. Interacts with host coagulation factor X/F10 (inactive and activated). In terms of tissue distribution, saliva (at protein level). Salivary gland.

It localises to the secreted. Anticoagulant protein that modulates blood feeding of ticks on vertebrate species. Inhibits activation of host blood coagulation factor X (F10). Inhibits activity of host coagulation factor VIIa-tissue factor (F7-F3) complex in a factor X/Xa-dependent manner. Prevents interaction between host coagulation factor X and activated factor VIIIa (F8). This chain is Ixolaris, found in Ixodes scapularis (Black-legged tick).